The chain runs to 233 residues: MADS-box protein CMB1 (233 aa).

The region spanning arginine 3–cysteine 58 is the MADS-box domain. A K-box domain is found at threonine 87–serine 177.

The protein localises to the nucleus. This chain is MADS-box protein CMB1 (CMB1), found in Dianthus caryophyllus (Carnation).